A 185-amino-acid chain; its full sequence is Ribosome-recycling factor (185 aa).

The protein belongs to the RRF family.

The protein resides in the cytoplasm. Functionally, responsible for the release of ribosomes from messenger RNA at the termination of protein biosynthesis. May increase the efficiency of translation by recycling ribosomes from one round of translation to another. The sequence is that of Ribosome-recycling factor from Tolumonas auensis (strain DSM 9187 / NBRC 110442 / TA 4).